The sequence spans 71 residues: Prokaryotic ubiquitin-like protein Pup (71 aa).

A compositionally biased stretch (low complexity) spans 1-18 (MATRDSGGQSQTGRSQQG). Residues 1 to 42 (MATRDSGGQSQTGRSQQGEEIEDVTTEASPEVAERHAEITED) form a disordered region. The segment at 27-65 (EASPEVAERHAEITEDVDDLLDEIDSVLEENAEEFVRGY) is ARC ATPase binding. Residues 31–60 (EVAERHAEITEDVDDLLDEIDSVLEENAEE) are a coiled coil. E71 participates in a covalent cross-link: Isoglutamyl lysine isopeptide (Glu-Lys) (interchain with K-? in acceptor proteins).

It belongs to the prokaryotic ubiquitin-like protein family. Strongly interacts with the proteasome-associated ATPase ARC through a hydrophobic interface; the interacting region of Pup lies in its C-terminal half. There is one Pup binding site per ARC hexamer ring.

It functions in the pathway protein degradation; proteasomal Pup-dependent pathway. Its function is as follows. Protein modifier that is covalently attached to lysine residues of substrate proteins, thereby targeting them for proteasomal degradation. The tagging system is termed pupylation. The sequence is that of Prokaryotic ubiquitin-like protein Pup from Salinispora arenicola (strain CNS-205).